The primary structure comprises 342 residues: Probable dual-specificity RNA methyltransferase RlmN (342 aa).

The active-site Proton acceptor is the glutamate 91. One can recognise a Radical SAM core domain in the interval 97-327 (YKHGNSICVS…TTIRREMGAD (231 aa)). A disulfide bond links cysteine 104 and cysteine 332. Residues cysteine 111, cysteine 115, and cysteine 118 each contribute to the [4Fe-4S] cluster site. S-adenosyl-L-methionine-binding positions include 158–159 (GE), serine 190, 213–215 (SLH), and asparagine 289. Catalysis depends on cysteine 332, which acts as the S-methylcysteine intermediate.

This sequence belongs to the radical SAM superfamily. RlmN family. Requires [4Fe-4S] cluster as cofactor.

Its subcellular location is the cytoplasm. The catalysed reaction is adenosine(2503) in 23S rRNA + 2 reduced [2Fe-2S]-[ferredoxin] + 2 S-adenosyl-L-methionine = 2-methyladenosine(2503) in 23S rRNA + 5'-deoxyadenosine + L-methionine + 2 oxidized [2Fe-2S]-[ferredoxin] + S-adenosyl-L-homocysteine. It catalyses the reaction adenosine(37) in tRNA + 2 reduced [2Fe-2S]-[ferredoxin] + 2 S-adenosyl-L-methionine = 2-methyladenosine(37) in tRNA + 5'-deoxyadenosine + L-methionine + 2 oxidized [2Fe-2S]-[ferredoxin] + S-adenosyl-L-homocysteine. Its function is as follows. Specifically methylates position 2 of adenine 2503 in 23S rRNA and position 2 of adenine 37 in tRNAs. The polypeptide is Probable dual-specificity RNA methyltransferase RlmN (Clostridium botulinum (strain Loch Maree / Type A3)).